The sequence spans 879 residues: Alanine--tRNA ligase (879 aa).

Zn(2+)-binding residues include histidine 566, histidine 570, cysteine 668, and histidine 672.

It belongs to the class-II aminoacyl-tRNA synthetase family. Requires Zn(2+) as cofactor.

Its subcellular location is the cytoplasm. It carries out the reaction tRNA(Ala) + L-alanine + ATP = L-alanyl-tRNA(Ala) + AMP + diphosphate. In terms of biological role, catalyzes the attachment of alanine to tRNA(Ala) in a two-step reaction: alanine is first activated by ATP to form Ala-AMP and then transferred to the acceptor end of tRNA(Ala). Also edits incorrectly charged Ser-tRNA(Ala) and Gly-tRNA(Ala) via its editing domain. This Oceanobacillus iheyensis (strain DSM 14371 / CIP 107618 / JCM 11309 / KCTC 3954 / HTE831) protein is Alanine--tRNA ligase.